A 652-amino-acid polypeptide reads, in one-letter code: Leucine-rich repeat-containing protein 4 (652 aa).

Positions 1 to 40 (MKLLWQVTVHHTWNAVLLPVVYLTAQVWILCAAIAAAASA) are cleaved as a signal peptide. The 34-residue stretch at 41–74 (GPQNCPSVCSCSNQFSKVVCTRRGLSEVPQGIPS) folds into the LRRNT domain. At 41–526 (GPQNCPSVCS…SLDEVMKTTK (486 aa)) the chain is on the extracellular side. 2 disulfide bridges follow: Cys45–Cys51 and Cys49–Cys60. 9 LRR repeats span residues 75–96 (NTRY…TFRH), 99–120 (HLEV…AFNG), 123–144 (SLNT…AFEY), 147–168 (KLRE…AFNR), 171–193 (SLMR…AFEG), 196–217 (NLKY…TPLV), 218–239 (GLEE…SFHG), 242–263 (SLKK…AFDG), and 266–287 (SLVE…LFTP). N-linked (GlcNAc...) asparagine glycans are attached at residues Asn276, Asn321, Asn362, Asn387, Asn409, Asn433, Asn439, and Asn449. One can recognise an LRRCT domain in the interval 299-351 (NPWNCDCDILWLAWWLREYIPTNSTCCGRCHAPMHMRGRYLVEVDQAAFQCSA). 2 disulfide bridges follow: Cys303–Cys328 and Cys305–Cys349. The 90-residue stretch at 352 to 441 (PFIMDAPRDL…SNASAYLNVS (90 aa)) folds into the Ig-like domain. Cys373 and Cys423 are joined by a disulfide. Residues 527–547 (IIIGCFVAVTLLAAAMLIVFY) form a helical membrane-spanning segment. The Cytoplasmic segment spans residues 548-652 (KLRKRHQQRS…TKDKVQETQI (105 aa)).

As to quaternary structure, interacts (via LRR repeats) with NTNG2. Interacts with DLG4. Forms a complex with DLG4 and with NMDA receptors. N-glycosylated. As to expression, specifically expressed in brain. In the hippocampus, parietal cortex and piriform cortex expressed in proximal segments of CA1 pyramidal neurons.

It is found in the membrane. It localises to the postsynaptic cell membrane. Functionally, synaptic adhesion protein. Regulates the formation of exitatory synapses through the recruitment of pre-and-postsynaptic proteins. Organize the lamina/pathway-specific differentiation of dendrites. Plays an important role for auditory synaptic responses. Involved in the suppression of glioma. The polypeptide is Leucine-rich repeat-containing protein 4 (Lrrc4) (Mus musculus (Mouse)).